We begin with the raw amino-acid sequence, 580 residues long: Proline--tRNA ligase (580 aa).

This sequence belongs to the class-II aminoacyl-tRNA synthetase family. ProS type 1 subfamily. In terms of assembly, homodimer.

The protein localises to the cytoplasm. The catalysed reaction is tRNA(Pro) + L-proline + ATP = L-prolyl-tRNA(Pro) + AMP + diphosphate. Catalyzes the attachment of proline to tRNA(Pro) in a two-step reaction: proline is first activated by ATP to form Pro-AMP and then transferred to the acceptor end of tRNA(Pro). As ProRS can inadvertently accommodate and process non-cognate amino acids such as alanine and cysteine, to avoid such errors it has two additional distinct editing activities against alanine. One activity is designated as 'pretransfer' editing and involves the tRNA(Pro)-independent hydrolysis of activated Ala-AMP. The other activity is designated 'posttransfer' editing and involves deacylation of mischarged Ala-tRNA(Pro). The misacylated Cys-tRNA(Pro) is not edited by ProRS. This is Proline--tRNA ligase from Polynucleobacter necessarius subsp. necessarius (strain STIR1).